A 117-amino-acid polypeptide reads, in one-letter code: Ig heavy chain V region 345 (117 aa).

The N-terminal stretch at 1-19 is a signal peptide; sequence MNFGLRLIFLVLTLKGVKC. Residues 20–49 are framework-1; it reads EVQLVESGGGLVKPGGSLKLSCAASGFAFS. A disulfide bridge links C41 with C115. The interval 50 to 54 is complementarity-determining-1; it reads SYDMS. Positions 55 to 68 are framework-2; sequence WVRQTPEKRLEWVA. The complementarity-determining-2 stretch occupies residues 69–85; that stretch reads YISSGGGSTYYPDTVKG. Residues 86–117 are framework-3; that stretch reads RFTISRDNAKNTLYLQMSSLKSEDTAMYYCAR.

This is Ig heavy chain V region 345 from Mus musculus (Mouse).